Consider the following 198-residue polypeptide: uncharacterized protein (198 aa).

A C4-type zinc finger spans residues 9–43; sequence CPVCGGKGTFVITSHQIDIPYFGPVLETTMICEKC.

The protein belongs to the ZPR1 family.

This is an uncharacterized protein from Methanocaldococcus jannaschii (strain ATCC 43067 / DSM 2661 / JAL-1 / JCM 10045 / NBRC 100440) (Methanococcus jannaschii).